A 496-amino-acid chain; its full sequence is NAD(P)H-quinone oxidoreductase subunit 2 A, chloroplastic (496 aa).

A run of 14 helical transmembrane segments spans residues 13 to 33 (SILP…IDLL), 41 to 61 (TFWS…ILLL), 83 to 103 (IFRF…VDYI), 110 to 130 (VTEF…LCGA), 133 to 153 (LISI…LSGY), 168 to 188 (LLMG…PYGL), 213 to 233 (VSIA…LVPF), 245 to 265 (PTPV…ALAT), 279 to 299 (WHLP…LIAV), 307 to 327 (MLAY…IAGD), 338 to 358 (YMLI…SFGL), 380 to 400 (LSLV…GFFG), 413 to 435 (LYFL…SRII), and 470 to 490 (MILC…IIAI).

Belongs to the complex I subunit 2 family. NDH is composed of at least 16 different subunits, 5 of which are encoded in the nucleus.

The protein resides in the plastid. The protein localises to the chloroplast thylakoid membrane. The enzyme catalyses a plastoquinone + NADH + (n+1) H(+)(in) = a plastoquinol + NAD(+) + n H(+)(out). The catalysed reaction is a plastoquinone + NADPH + (n+1) H(+)(in) = a plastoquinol + NADP(+) + n H(+)(out). Functionally, NDH shuttles electrons from NAD(P)H:plastoquinone, via FMN and iron-sulfur (Fe-S) centers, to quinones in the photosynthetic chain and possibly in a chloroplast respiratory chain. The immediate electron acceptor for the enzyme in this species is believed to be plastoquinone. Couples the redox reaction to proton translocation, and thus conserves the redox energy in a proton gradient. The chain is NAD(P)H-quinone oxidoreductase subunit 2 A, chloroplastic from Psilotum nudum (Whisk fern).